Consider the following 268-residue polypeptide: Small ribosomal subunit protein eS1 (268 aa).

The segment at 1-21 is disordered; the sequence is MAVGKNKGLSKGGKKGGKKKV.

It belongs to the eukaryotic ribosomal protein eS1 family. Component of the small ribosomal subunit. Mature ribosomes consist of a small (40S) and a large (60S) subunit. The 40S subunit contains about 33 different proteins and 1 molecule of RNA (18S). The 60S subunit contains about 49 different proteins and 3 molecules of RNA (28S, 5.8S and 5S).

It localises to the cytoplasm. Functionally, essential for oogenesis; required for late follicle cell development. This Drosophila erecta (Fruit fly) protein is Small ribosomal subunit protein eS1.